We begin with the raw amino-acid sequence, 606 residues long: MVAVAAFSSSGQDKPAHTPKLGLFVYILAAASVIGGFLFGYDTSVVSAAMLYMPDAPGLKPMDTVWQEVLVSISPGMAAVGSLMSGTSSDYIGRRKVILGASAIFTIGALVCAASVNKIMLLVGRVLLGIAIGFASMIVPVYLGETAPTHVRGMLVAAFALMISFGQVVANITGGAFSYIDPYNVGWRLMFAFAAVPSIIQFVCFMFLPETPRWLYENGFETETREVLEKVYNGDKEWVEYEMAEIIAFNEDQAKENEKAHASGPVIWRILKTPHVLKACFIGSMLQAFQQLAGINTILYYTADIIRSSGISNNHTTIWISVLLSLCNFIGPFVPMSLIEKVGRRIIFLFSCGLVVLSLVFIGVAFLLVNHDSAATLPANQYGSNFNSSYPDAKGCMAYSNCDYCVTTDACGFCHDANTKQGYCLPAGFDNPEVYSSTGSCTNSNGSIANNFKWEKYYCDTKYTLLPIIACGVYLLTFSSGFTSLPWVLNSEFYPMWARSTCVAISTTSNWVFNLIIALTYLSLTQVIGKYGAFWLYAGLTVIAFIFILFLVPETKGYSIEEVEMLFMNKKQRREAESRRRETVTEVRSRMNSTVSFGQHNEVHKY.

Over 1–20 the chain is Cytoplasmic; sequence MVAVAAFSSSGQDKPAHTPK. The helical transmembrane segment at 21–41 threads the bilayer; sequence LGLFVYILAAASVIGGFLFGY. The Extracellular segment spans residues 42–63; the sequence is DTSVVSAAMLYMPDAPGLKPMD. A helical transmembrane segment spans residues 64 to 84; sequence TVWQEVLVSISPGMAAVGSLM. Residues 85-96 lie on the Cytoplasmic side of the membrane; sequence SGTSSDYIGRRK. A helical transmembrane segment spans residues 97–117; sequence VILGASAIFTIGALVCAASVN. Position 118 (Lys-118) is a topological domain, extracellular. The helical transmembrane segment at 119 to 139 threads the bilayer; the sequence is IMLLVGRVLLGIAIGFASMIV. Topologically, residues 140–152 are cytoplasmic; sequence PVYLGETAPTHVR. Residues 153–173 traverse the membrane as a helical segment; the sequence is GMLVAAFALMISFGQVVANIT. Residues 174–188 are Extracellular-facing; that stretch reads GGAFSYIDPYNVGWR. A helical membrane pass occupies residues 189 to 209; it reads LMFAFAAVPSIIQFVCFMFLP. Over 210–278 the chain is Cytoplasmic; that stretch reads ETPRWLYENG…RILKTPHVLK (69 aa). The helical transmembrane segment at 279 to 299 threads the bilayer; sequence ACFIGSMLQAFQQLAGINTIL. At 300 to 317 the chain is on the extracellular side; sequence YYTADIIRSSGISNNHTT. An N-linked (GlcNAc...) asparagine glycan is attached at Asn-314. Residues 318 to 338 form a helical membrane-spanning segment; that stretch reads IWISVLLSLCNFIGPFVPMSL. Topologically, residues 339–345 are cytoplasmic; sequence IEKVGRR. Residues 346-366 traverse the membrane as a helical segment; it reads IIFLFSCGLVVLSLVFIGVAF. At 367–464 the chain is on the extracellular side; it reads LLVNHDSAAT…EKYYCDTKYT (98 aa). 2 N-linked (GlcNAc...) asparagine glycosylation sites follow: Asn-387 and Asn-445. Residues 465–485 traverse the membrane as a helical segment; the sequence is LLPIIACGVYLLTFSSGFTSL. Residues 486 to 501 lie on the Cytoplasmic side of the membrane; it reads PWVLNSEFYPMWARST. Residues 502 to 522 form a helical membrane-spanning segment; sequence CVAISTTSNWVFNLIIALTYL. Topologically, residues 523–531 are extracellular; that stretch reads SLTQVIGKY. Residues 532-552 traverse the membrane as a helical segment; that stretch reads GAFWLYAGLTVIAFIFILFLV. Residues 553 to 606 are Cytoplasmic-facing; sequence PETKGYSIEEVEMLFMNKKQRREAESRRRETVTEVRSRMNSTVSFGQHNEVHKY.

Belongs to the major facilitator superfamily. Sugar transporter (TC 2.A.1.1) family. As to expression, expressed in the intestine.

It is found in the cell membrane. The enzyme catalyses myo-inositol(out) + H(+)(out) = myo-inositol(in) + H(+)(in). H(+)-myo-inositol cotransporter. Probably by promoting the transport of myo-inositol regulates intracellular osmosis in response to hyperosmotic stress. This chain is Proton myo-inositol cotransporter hmit-1.1, found in Caenorhabditis elegans.